The sequence spans 402 residues: Plasminogen activator inhibitor 1 (402 aa).

An N-terminal signal peptide occupies residues 1–22 (MQMSSALACLILGLVLVSGKGF). 3 N-linked (GlcNAc...) asparagine glycosylation sites follow: Asn232, Asn288, and Asn352.

This sequence belongs to the serpin family. In terms of assembly, forms a heterodimer with TMPRSS7. Interacts with VTN. Binds LRP1B; binding is followed by internalization and degradation. Interacts with PPP1CB. In complex with PLAU/uPA, interacts with PLAUR/uPAR. Interacts with SORL1 and LRP1, either alone or in complex with PLAU; these interactions are abolished in the presence of LRPAP1/RAP. The ternary complex composed of PLAUR-PLAU-PAI1 also interacts with SORL1. Interacts with PLAT/tPA. Also interacts with SORL1, when complexed to PLAT/tPA.

It is found in the secreted. Serine protease inhibitor. Inhibits TMPRSS7. Is a primary inhibitor of tissue-type plasminogen activator (PLAT) and urokinase-type plasminogen activator (PLAU). As PLAT inhibitor, it is required for fibrinolysis down-regulation and is responsible for the controlled degradation of blood clots. As PLAU inhibitor, it is involved in the regulation of cell adhesion and spreading. Acts as a regulator of cell migration, independently of its role as protease inhibitor. It is required for stimulation of keratinocyte migration during cutaneous injury repair. Involved in cellular and replicative senescence. Plays a role in alveolar type 2 cells senescence in the lung. Is involved in the regulation of cementogenic differentiation of periodontal ligament stem cells, and regulates odontoblast differentiation and dentin formation during odontogenesis. The sequence is that of Plasminogen activator inhibitor 1 (Serpine1) from Mus musculus (Mouse).